Reading from the N-terminus, the 646-residue chain is Hypoxia up-regulated protein 1 (646 aa).

The first 22 residues, M1–S22, serve as a signal peptide directing secretion. The segment at L572–E646 is disordered. The span at V590–D610 shows a compositional bias: acidic residues. A compositionally biased stretch (basic and acidic residues) spans P611 to E646.

Belongs to the heat shock protein 70 family.

The protein localises to the endoplasmic reticulum lumen. Has a pivotal role in cytoprotective cellular mechanisms triggered by oxygen deprivation. May play a role as a molecular chaperone and participate in protein folding. The polypeptide is Hypoxia up-regulated protein 1 (hyou1) (Xenopus laevis (African clawed frog)).